The primary structure comprises 203 residues: Apoptosis-associated speck-like protein containing a CARD (203 aa).

Residues 1 to 91 enclose the Pyrin domain; the sequence is MAESFKEHLQ…DDLLRNTGQS (91 aa). The CARD domain occupies 112-203; the sequence is VAFSKVNFID…FLMDDLEDAE (92 aa).

In terms of assembly, self-associates (via pyrin and CARD domains). Interacts (via pyrin domain) with caspa (via pyrin domain). Interacts with caspb; the interaction only occurs in the presence of nlrp1. Component of NLRP1 inflammasomes. Inflammasomes are supramolecular complexes that assemble in the cytosol in response to pathogens and other damage-associated signals and play critical roles in innate immunity and inflammation. The NLRP1 inflammasome is composed of the signal sensor nlrp1, and the adapter pycard (asc), which recruit effector pro-inflammatory caspases caspa and/or caspb. The interaction between nlrp1 and pycard is required for the sequential recruitment of caspa and then caspb. Within the complex caspa is preferentially recruited first and this causes the cleavage of pro-il1b into the midformed il1b. This is followed by the recruitment of caspb, which is activated and cleaves the midformed il1b resulting in il1b maturation. Interacts (via pyrin domain) with NLP3X1 (via pyrin domain). Interacts with gbp4. As to expression, expressed in the kidney, intestine and gill. Expressed at low levels in the heart.

The protein localises to the cytoplasm. It localises to the inflammasome. Its function is as follows. Functions as a key mediator in apoptosis and inflammation. Promotes caspase-mediated apoptosis. Induces proteolytic processing of caspa and caspa-dependent apoptosis. Involved in innate immune response by acting as an integral adapter in the assembly of various inflammasomes which recruit and activate caspase-1 leading to processing and secretion of pro-inflammatory cytokines. Caspase-1-dependent inflammation leads to macrophage pyroptosis, a form of cell death. The function as activating adapter in different types of inflammasomes is mediated by the pyrin and CARD domains and their homotypic interactions. Clustered PYCARD nucleates the formation of caspase-1 filaments through the interaction of their respective CARD domains, acting as a platform for of caspase-1 polymerization. Also involved in transcriptional activation of cytokines and chemokines independent of the inflammasome. This chain is Apoptosis-associated speck-like protein containing a CARD (pycard), found in Danio rerio (Zebrafish).